Here is a 520-residue protein sequence, read N- to C-terminus: MSNISTDLQDVEKIIVLDYGSQYNQLISRRIREIGVFSELKSHKISAAEVREVNPVGIILSGGPNSVYEDGSFDIDPEIFELGIPILGICYGMQLLTHKLGGKVVPAGDAGNREYGQSTLTHTPSALFESTPDEQTVLMSHGDAVTEIPADFVRTGTSADCLYAAIENPDKHIYGIQFHPEVRHSVYGNDILRNFALNICKAKGDWSMDNFIDMQIKKIRETVGDKRVLLGLSGGVDSSVVGVLLQKAIGDQLICIFVDHGLLRKGEADQVMDMLGGKFGLNIVKADAAKRFLDKLAGVSDPEQKRKIIGNEFVYVFDDEASKLKDVKFLAQGTLYTDVIESGTDTAQTIKSHHNVGGLPEDMQFELIEPLNTLYKDEVRALGTELGMPDHIVWRQPFPGPGLAIRVMGEITEEKLETVRESDAILREEIAKAGLDRDIWQYFTVNTGVRSVGVMGDGRTYDYTIAIRAITSIDGMTADFAKIPWEVLQKISVRIVNEVDHVNRIVYDITSKPPATVEWE.

The region spanning 13-205 (KIIVLDYGSQ…ALNICKAKGD (193 aa)) is the Glutamine amidotransferase type-1 domain. C90 serves as the catalytic Nucleophile. Active-site residues include H179 and E181. Residues 206 to 395 (WSMDNFIDMQ…LGMPDHIVWR (190 aa)) form the GMPS ATP-PPase domain. Residue 233–239 (SGGVDSS) coordinates ATP.

In terms of assembly, homodimer.

The enzyme catalyses XMP + L-glutamine + ATP + H2O = GMP + L-glutamate + AMP + diphosphate + 2 H(+). It participates in purine metabolism; GMP biosynthesis; GMP from XMP (L-Gln route): step 1/1. Functionally, catalyzes the synthesis of GMP from XMP. In Streptococcus pneumoniae (strain ATCC 700669 / Spain 23F-1), this protein is GMP synthase [glutamine-hydrolyzing].